A 581-amino-acid chain; its full sequence is NADH-quinone oxidoreductase subunit C/D (581 aa).

An NADH dehydrogenase I subunit C region spans residues 1–172 (MSAVELVNEL…PPFVMTAARF (172 aa)). Residues 196–581 (ELMILNYGPH…IDYVMSDVDR (386 aa)) are NADH dehydrogenase I subunit D.

It in the N-terminal section; belongs to the complex I 30 kDa subunit family. This sequence in the C-terminal section; belongs to the complex I 49 kDa subunit family. NDH-1 is composed of 13 different subunits. Subunits NuoB, CD, E, F, and G constitute the peripheral sector of the complex.

Its subcellular location is the cell inner membrane. It carries out the reaction a quinone + NADH + 5 H(+)(in) = a quinol + NAD(+) + 4 H(+)(out). NDH-1 shuttles electrons from NADH, via FMN and iron-sulfur (Fe-S) centers, to quinones in the respiratory chain. The immediate electron acceptor for the enzyme in this species is believed to be ubiquinone. Couples the redox reaction to proton translocation (for every two electrons transferred, four hydrogen ions are translocated across the cytoplasmic membrane), and thus conserves the redox energy in a proton gradient. The polypeptide is NADH-quinone oxidoreductase subunit C/D (Rhodopseudomonas palustris (strain BisB18)).